The primary structure comprises 284 residues: 4-hydroxybenzoate octaprenyltransferase (284 aa).

Transmembrane regions (helical) follow at residues 33 to 53 (VIAA…LGVF), 93 to 113 (IGLF…MNPL), 136 to 156 (YLPQ…AWAA), 159 to 179 (GELP…TIAY), 209 to 229 (LVIG…GQHY), 231 to 248 (LGQS…LFVY), and 264 to 284 (AFLN…IAFW).

Belongs to the UbiA prenyltransferase family. Mg(2+) serves as cofactor.

The protein localises to the cell inner membrane. It carries out the reaction all-trans-octaprenyl diphosphate + 4-hydroxybenzoate = 4-hydroxy-3-(all-trans-octaprenyl)benzoate + diphosphate. It functions in the pathway cofactor biosynthesis; ubiquinone biosynthesis. In terms of biological role, catalyzes the prenylation of para-hydroxybenzoate (PHB) with an all-trans polyprenyl group. Mediates the second step in the final reaction sequence of ubiquinone-8 (UQ-8) biosynthesis, which is the condensation of the polyisoprenoid side chain with PHB, generating the first membrane-bound Q intermediate 3-octaprenyl-4-hydroxybenzoate. This is 4-hydroxybenzoate octaprenyltransferase from Vibrio campbellii (strain ATCC BAA-1116).